The following is a 369-amino-acid chain: 2-aminoethylphosphonate--pyruvate transaminase (369 aa).

Position 193 is an N6-(pyridoxal phosphate)lysine (Lys193).

Belongs to the class-V pyridoxal-phosphate-dependent aminotransferase family. PhnW subfamily. In terms of assembly, homodimer. It depends on pyridoxal 5'-phosphate as a cofactor.

The catalysed reaction is (2-aminoethyl)phosphonate + pyruvate = phosphonoacetaldehyde + L-alanine. In terms of biological role, involved in phosphonate degradation. The sequence is that of 2-aminoethylphosphonate--pyruvate transaminase from Pseudomonas fluorescens (strain ATCC BAA-477 / NRRL B-23932 / Pf-5).